Reading from the N-terminus, the 184-residue chain is MKSLLLLTTLLVPLHLGMAWSAKYAVDCPEHCDKTECRSSLRCKRTVLDDCGCCQVCAAGPGETCYRTVSGMDGVKCGPGLKCHFYSEEDDFGDEFGICKDCPYGTFGMECKETCNCQSGICDRVTGRCLDFPFFQYAAAKSPSRTSASHTERDSASGDGNAVREEIGEGNAARPSVMKWLNPR.

The signal sequence occupies residues 1-21; that stretch reads MKSLLLLTTLLVPLHLGMAWS. An IGFBP N-terminal domain is found at 24–102; it reads YAVDCPEHCD…GDEFGICKDC (79 aa). Disulfide bonds link cysteine 28–cysteine 51, cysteine 32–cysteine 53, cysteine 37–cysteine 54, cysteine 43–cysteine 57, cysteine 65–cysteine 83, and cysteine 77–cysteine 99. The interval 145–184 is disordered; sequence RTSASHTERDSASGDGNAVREEIGEGNAARPSVMKWLNPR. The span at 150-167 shows a compositional bias: basic and acidic residues; that stretch reads HTERDSASGDGNAVREEI. Serine 157 is a glycosylation site (O-linked (Xyl...) (chondroitin sulfate) serine).

Post-translationally, O-glycosylated; contains chondroitin sulfate and dermatan sulfate.

It localises to the secreted. In terms of biological role, involved in angiogenesis; promotes angiogenic sprouting. May have potent implications in lung endothelial cell-leukocyte interactions. This is Endothelial cell-specific molecule 1 (Esm1) from Mus musculus (Mouse).